Here is a 275-residue protein sequence, read N- to C-terminus: Chlorobenzene dihydrodiol dehydrogenase (275 aa).

Catalysis depends on Tyr-155, which acts as the Proton acceptor.

The protein belongs to the short-chain dehydrogenases/reductases (SDR) family.

The catalysed reaction is (1R,2R)-3-chlorocyclohexa-3,5-diene-1,2-diol + NAD(+) = 3-chlorocatechol + NADH + H(+). The protein operates within aromatic compound metabolism. Can transform various dihydrodiols of chlorobenzenes and chlorotoluenes into the respective catechols. This chain is Chlorobenzene dihydrodiol dehydrogenase, found in Cupriavidus sp. (strain PS12).